A 431-amino-acid chain; its full sequence is Adenylosuccinate synthetase (431 aa).

GTP-binding positions include 12-18 and 40-42; these read GDEGKGK and GHT. The Proton acceptor role is filled by Asp-13. Mg(2+) contacts are provided by Asp-13 and Gly-40. Residues 13–16, 38–41, Thr-130, Arg-144, Gln-224, Thr-239, and Arg-303 contribute to the IMP site; these read DEGK and NAGH. Residue His-41 is the Proton donor of the active site. 299 to 305 is a substrate binding site; sequence STTGRPR. Residues Arg-305, 331–333, and 413–415 each bind GTP; these read KAD and SIG.

The protein belongs to the adenylosuccinate synthetase family. In terms of assembly, homodimer. Mg(2+) serves as cofactor.

It localises to the cytoplasm. The enzyme catalyses IMP + L-aspartate + GTP = N(6)-(1,2-dicarboxyethyl)-AMP + GDP + phosphate + 2 H(+). The protein operates within purine metabolism; AMP biosynthesis via de novo pathway; AMP from IMP: step 1/2. In terms of biological role, plays an important role in the de novo pathway of purine nucleotide biosynthesis. Catalyzes the first committed step in the biosynthesis of AMP from IMP. The chain is Adenylosuccinate synthetase from Cytophaga hutchinsonii (strain ATCC 33406 / DSM 1761 / CIP 103989 / NBRC 15051 / NCIMB 9469 / D465).